The sequence spans 208 residues: Outer-membrane lipoprotein carrier protein (208 aa).

A signal peptide spans 1–22; sequence MRKTLSILAISLPLLVSGYAQA.

Belongs to the LolA family. Monomer.

The protein localises to the periplasm. Functionally, participates in the translocation of lipoproteins from the inner membrane to the outer membrane. Only forms a complex with a lipoprotein if the residue after the N-terminal Cys is not an aspartate (The Asp acts as a targeting signal to indicate that the lipoprotein should stay in the inner membrane). This chain is Outer-membrane lipoprotein carrier protein, found in Shewanella sediminis (strain HAW-EB3).